Reading from the N-terminus, the 129-residue chain is UPF0102 protein Ctha_1382 (129 aa).

Belongs to the UPF0102 family.

The protein is UPF0102 protein Ctha_1382 of Chloroherpeton thalassium (strain ATCC 35110 / GB-78).